The following is a 368-amino-acid chain: DNA replication and repair protein RecF (368 aa).

Residue 30-37 coordinates ATP; sequence GNNAQGKT.

This sequence belongs to the RecF family.

It is found in the cytoplasm. Functionally, the RecF protein is involved in DNA metabolism; it is required for DNA replication and normal SOS inducibility. RecF binds preferentially to single-stranded, linear DNA. It also seems to bind ATP. The chain is DNA replication and repair protein RecF from Streptococcus pyogenes serotype M4 (strain MGAS10750).